We begin with the raw amino-acid sequence, 257 residues long: Zinc finger protein 8 (257 aa).

Disordered stretches follow at residues 48–92, 108–128, and 214–238; these read GDNS…NNNN, QALG…KRGS, and GVYS…PNNW. Polar residues predominate over residues 50–65; that stretch reads NSDNLSAEPSDHQTTT. Basic and acidic residues predominate over residues 66 to 92; sequence KNDESSENIKDKDKEKDKDKDKDNNNN. The C2H2-type zinc-finger motif lies at 95–117; it reads FECHYCFRNFPTSQALGGHQNAH. Residues 115 to 126 are compositionally biased toward basic residues; it reads NAHKRERQHAKR.

As to expression, expressed in developing cauline leaves.

The protein resides in the nucleus. Its function is as follows. Probable transcription factor required for the initiation of inflorescence trichomes in response to gibberellin and cytokinin. Is not involved in the regulation of trichome branching. Is functionally equivalent to GIS2. Acts as a negative regulator of abscisic acid (ABA) signaling during germination and early seedling development. This Arabidopsis thaliana (Mouse-ear cress) protein is Zinc finger protein 8.